A 564-amino-acid polypeptide reads, in one-letter code: Eukaryotic translation initiation factor 3 subunit L (564 aa).

Position 2 is an N-acetylserine (Ser-2). Ser-21 bears the Phosphoserine mark. The region spanning 331 to 537 is the PCI domain; sequence DAIRVFANIL…IHIADTKVAR (207 aa). N6-acetyllysine occurs at positions 465 and 549.

Component of the eukaryotic translation initiation factor 3 (eIF-3) complex, which is composed of 13 subunits: EIF3A, EIF3B, EIF3C, EIF3D, EIF3E, EIF3F, EIF3G, EIF3H, EIF3I, EIF3J, EIF3K, EIF3L and EIF3M. The eIF-3 complex appears to include 3 stable modules: module A is composed of EIF3A, EIF3B, EIF3G and EIF3I; module B is composed of EIF3F, EIF3H, and EIF3M; and module C is composed of EIF3C, EIF3D, EIF3E, EIF3K and EIF3L. EIF3C of module C binds EIF3B of module A and EIF3H of module B, thereby linking the three modules. EIF3J is a labile subunit that binds to the eIF-3 complex via EIF3B. The eIF-3 complex interacts with RPS6KB1 under conditions of nutrient depletion. Mitogenic stimulation leads to binding and activation of a complex composed of MTOR and RPTOR, leading to phosphorylation and release of RPS6KB1 and binding of EIF4B to eIF-3. Interacts with RRN3.

The protein localises to the cytoplasm. Component of the eukaryotic translation initiation factor 3 (eIF-3) complex, which is required for several steps in the initiation of protein synthesis. The eIF-3 complex associates with the 40S ribosome and facilitates the recruitment of eIF-1, eIF-1A, eIF-2:GTP:methionyl-tRNAi and eIF-5 to form the 43S pre-initiation complex (43S PIC). The eIF-3 complex stimulates mRNA recruitment to the 43S PIC and scanning of the mRNA for AUG recognition. The eIF-3 complex is also required for disassembly and recycling of post-termination ribosomal complexes and subsequently prevents premature joining of the 40S and 60S ribosomal subunits prior to initiation. The eIF-3 complex specifically targets and initiates translation of a subset of mRNAs involved in cell proliferation, including cell cycling, differentiation and apoptosis, and uses different modes of RNA stem-loop binding to exert either translational activation or repression. In terms of biological role, (Microbial infection) In case of FCV infection, plays a role in the ribosomal termination-reinitiation event leading to the translation of VP2. This Homo sapiens (Human) protein is Eukaryotic translation initiation factor 3 subunit L.